We begin with the raw amino-acid sequence, 304 residues long: D-alanine--D-alanine ligase (304 aa).

One can recognise an ATP-grasp domain in the interval 103–299; that stretch reads KLIWQALGLP…FADLCIEILK (197 aa). 129–184 provides a ligand contact to ATP; that stretch reads EEKLGLPMFVKPAAEGSSVGVVKVKGKGRLKSVYEELKHLQGEIIAERFIGGGEYS. The Mg(2+) site is built by D253, E266, and N268.

Belongs to the D-alanine--D-alanine ligase family. Mg(2+) serves as cofactor. It depends on Mn(2+) as a cofactor.

Its subcellular location is the cytoplasm. The enzyme catalyses 2 D-alanine + ATP = D-alanyl-D-alanine + ADP + phosphate + H(+). Its pathway is cell wall biogenesis; peptidoglycan biosynthesis. Cell wall formation. This Neisseria meningitidis serogroup C / serotype 2a (strain ATCC 700532 / DSM 15464 / FAM18) protein is D-alanine--D-alanine ligase.